The primary structure comprises 355 residues: Isopentenyl-diphosphate delta-isomerase (355 aa).

12 to 13 (RK) lines the substrate pocket. FMN-binding positions include serine 70, 71–73 (SMT), serine 101, and asparagine 130. Position 101–103 (101–103 (SMR)) interacts with substrate. A substrate-binding site is contributed by glutamine 165. Glutamate 166 lines the Mg(2+) pocket. FMN contacts are provided by residues lysine 197 and 308–309 (AG).

The protein belongs to the IPP isomerase type 2 family. Homooctamer. Dimer of tetramers. FMN serves as cofactor. Requires NADPH as cofactor. It depends on Mg(2+) as a cofactor.

Its subcellular location is the cytoplasm. The enzyme catalyses isopentenyl diphosphate = dimethylallyl diphosphate. Functionally, involved in the biosynthesis of isoprenoids. Catalyzes the 1,3-allylic rearrangement of the homoallylic substrate isopentenyl (IPP) to its allylic isomer, dimethylallyl diphosphate (DMAPP). The sequence is that of Isopentenyl-diphosphate delta-isomerase from Chlorobium phaeovibrioides (strain DSM 265 / 1930) (Prosthecochloris vibrioformis (strain DSM 265)).